The sequence spans 202 residues: Probable chemoreceptor glutamine deamidase CheD 2 (202 aa).

Belongs to the CheD family.

It catalyses the reaction L-glutaminyl-[protein] + H2O = L-glutamyl-[protein] + NH4(+). Its function is as follows. Probably deamidates glutamine residues to glutamate on methyl-accepting chemotaxis receptors (MCPs), playing an important role in chemotaxis. This Shewanella oneidensis (strain ATCC 700550 / JCM 31522 / CIP 106686 / LMG 19005 / NCIMB 14063 / MR-1) protein is Probable chemoreceptor glutamine deamidase CheD 2.